Reading from the N-terminus, the 335-residue chain is Glycerol-3-phosphate dehydrogenase [NAD(P)+] (335 aa).

NADPH-binding residues include Trp-12 and Lys-106. Sn-glycerol 3-phosphate is bound by residues Lys-106, Gly-136, and Ser-138. Residue Ala-140 coordinates NADPH. Lys-191, Asp-244, Ser-254, Arg-255, and Asn-256 together coordinate sn-glycerol 3-phosphate. The active-site Proton acceptor is Lys-191. Arg-255 is an NADPH binding site. The NADPH site is built by Val-279 and Glu-281.

This sequence belongs to the NAD-dependent glycerol-3-phosphate dehydrogenase family.

The protein resides in the cytoplasm. The catalysed reaction is sn-glycerol 3-phosphate + NAD(+) = dihydroxyacetone phosphate + NADH + H(+). It catalyses the reaction sn-glycerol 3-phosphate + NADP(+) = dihydroxyacetone phosphate + NADPH + H(+). It functions in the pathway membrane lipid metabolism; glycerophospholipid metabolism. In terms of biological role, catalyzes the reduction of the glycolytic intermediate dihydroxyacetone phosphate (DHAP) to sn-glycerol 3-phosphate (G3P), the key precursor for phospholipid synthesis. The sequence is that of Glycerol-3-phosphate dehydrogenase [NAD(P)+] from Fusobacterium nucleatum subsp. nucleatum (strain ATCC 25586 / DSM 15643 / BCRC 10681 / CIP 101130 / JCM 8532 / KCTC 2640 / LMG 13131 / VPI 4355).